Consider the following 494-residue polypeptide: Bifunctional pantoate ligase/cytidylate kinase (494 aa).

A pantoate--beta-alanine ligase region spans residues 1–258 (MHFVPTMGGL…CGSTRLIDHA (258 aa)). Residue 7-14 (MGGLHHGH) coordinates ATP. The active-site Proton donor is the histidine 14. Glutamine 41 is a binding site for (R)-pantoate. Position 41 (glutamine 41) interacts with beta-alanine. Residue 130–133 (GEKD) coordinates ATP. Glutamine 136 is a binding site for (R)-pantoate. Residues valine 159 and 167-170 (SSSR) each bind ATP. The interval 259 to 494 (FLMTRSPLVA…VGEEVWPTPV (236 aa)) is cytidylate kinase.

In the N-terminal section; belongs to the pantothenate synthetase family. It in the C-terminal section; belongs to the cytidylate kinase family. Type 1 subfamily.

The protein localises to the cytoplasm. It carries out the reaction (R)-pantoate + beta-alanine + ATP = (R)-pantothenate + AMP + diphosphate + H(+). The enzyme catalyses CMP + ATP = CDP + ADP. It catalyses the reaction dCMP + ATP = dCDP + ADP. Its pathway is cofactor biosynthesis; (R)-pantothenate biosynthesis; (R)-pantothenate from (R)-pantoate and beta-alanine: step 1/1. In terms of biological role, catalyzes the condensation of pantoate with beta-alanine in an ATP-dependent reaction via a pantoyl-adenylate intermediate. Functionally, catalyzes the transfer of a phosphate group from ATP to either CMP or dCMP to form CDP or dCDP and ADP, respectively. The chain is Bifunctional pantoate ligase/cytidylate kinase from Synechococcus sp. (strain CC9311).